Here is a 76-residue protein sequence, read N- to C-terminus: ATP synthase subunit 9, mitochondrial (76 aa).

The residue at position 1 (Met-1) is an N-formylmethionine. Transmembrane regions (helical) follow at residues Ile-14–Ile-34 and Ile-52–Leu-72.

It belongs to the ATPase C chain family. In terms of assembly, F-type ATPases have 2 components, CF(1) - the catalytic core - and CF(0) - the membrane proton channel. In yeast, the dimeric form of ATP synthase consists of 18 polypeptides: alpha, beta, gamma, delta, epsilon, 4 (B), 5 (OSCP), 6 (A), 8, 9 (C), d, E (Tim11), f, g, h, i, j and k.

The protein resides in the mitochondrion membrane. Its function is as follows. Mitochondrial membrane ATP synthase (F(1)F(0) ATP synthase or Complex V) produces ATP from ADP in the presence of a proton gradient across the membrane which is generated by electron transport complexes of the respiratory chain. F-type ATPases consist of two structural domains, F(1) - containing the extramembraneous catalytic core and F(0) - containing the membrane proton channel, linked together by a central stalk and a peripheral stalk. During catalysis, ATP synthesis in the catalytic domain of F(1) is coupled via a rotary mechanism of the central stalk subunits to proton translocation. Part of the complex F(0) domain. A homomeric c-ring of probably 10 subunits is part of the complex rotary element. In Saccharomyces paradoxus (Yeast), this protein is ATP synthase subunit 9, mitochondrial (ATP9).